The chain runs to 336 residues: Telomere-binding protein cav (336 aa).

The segment at 107–328 is required for binding to Su(var)205; the sequence is RKKMVQPYPE…TITFQNSESE (222 aa). 2 disordered regions span residues 137-158 and 199-218; these read RLDR…SPAR and SSDL…SEFQ. 2 short sequence motifs (su(var)205-binding Pro-containing repeat) span residues 225–231 and 289–295; these read PETAINE and PETEMNE. Residues 308-327 are compositionally biased toward polar residues; sequence MSIGPSIDSEGTITFQNSES. The segment at 308–336 is disordered; it reads MSIGPSIDSEGTITFQNSESEPIDVDSIA.

As to quaternary structure, interacts (via C-terminus) with Su(var)205 dimer (via hinge and chromoshadow domain) and with moi to form the terminin, telomere-capping, complex. Interacts with HP6, which is also part of the terminin complex.

The protein resides in the nucleus. Its subcellular location is the chromosome. It localises to the telomere. Functionally, binds to chromosome ends in a sequence-dependent manner and is required for telomere capping. In Drosophila sechellia (Fruit fly), this protein is Telomere-binding protein cav.